The primary structure comprises 173 residues: Photosystem I reaction center subunit XI (173 aa).

Transmembrane regions (helical) follow at residues 92–112 (LAGLLAAIGLVVLLTGALSLY) and 148–168 (LIGGIGGAVVAYFLTSNLGII).

It belongs to the PsaL family.

The protein resides in the cellular thylakoid membrane. The protein is Photosystem I reaction center subunit XI of Nostoc punctiforme (strain ATCC 29133 / PCC 73102).